The sequence spans 979 residues: UPF0182 protein BCG_0095 (979 aa).

A run of 7 helical transmembrane segments spans residues 19–39 (LVTA…LVDI), 63–83 (LAIV…ALLL), 114–134 (LFGW…ASFD), 174–194 (WLFV…YLFG), 211–231 (VQLA…YWLD), 260–280 (KLVL…AIFL), and 288–308 (MAAA…PLLM). Residues 898–948 (GTGRVATAPGGDAASAPPPGAGGPAPPQAVPPPRTTQPPAAPPRGPDVPPA) form a disordered region. The segment covering 902–912 (VATAPGGDAAS) has biased composition (low complexity). Residues 913-946 (APPPGAGGPAPPQAVPPPRTTQPPAAPPRGPDVP) are compositionally biased toward pro residues.

This sequence belongs to the UPF0182 family.

The protein localises to the cell membrane. This is UPF0182 protein BCG_0095 from Mycobacterium bovis (strain BCG / Pasteur 1173P2).